Reading from the N-terminus, the 202-residue chain is QQRFPQRYVMLAIVADHGMVTKYSGNSSAITTRVHQMVSHVTEMYSPLNIATTLSLLRIWSSKDLITVQSDSSVTLGSFGDWRKVVLLSQQAHDCAFLNTATALDDSTIGLAYSNGMCDPKFSVGLVQDHSSNVFMVAVTMTHELGHNLGMAHDEAGGCACSSCIMSPAASSGPSKLFSDCSKDDYQTFLTNTNPQCILNAP.

Residue Gln1 is modified to Pyrrolidone carboxylic acid. The Peptidase M12B domain occupies 7–202 (RYVMLAIVAD…TNPQCILNAP (196 aa)). 3 disulfide bridges follow: Cys118–Cys197, Cys159–Cys181, and Cys161–Cys164. His143 is a Zn(2+) binding site. Residue Glu144 is part of the active site. Zn(2+)-binding residues include His147 and His153.

This sequence belongs to the venom metalloproteinase (M12B) family. P-I subfamily. In terms of assembly, monomer. Zn(2+) is required as a cofactor. In terms of processing, the N-terminus is blocked. Not glycosylated. Expressed by the venom gland.

It localises to the secreted. With respect to regulation, inhibited by EDTA and 1,10-phenanthroline. Is also inhibited by endogenous tripeptide inhibitors pyroGlu-Asn-Trp, pyroGlu-Gln-Trp, and pyroGlu-Lys-Trp. Functionally, potent fibrinogenolytic protease which cleaves mainly the Aalpha (FGA) and Bbeta (FGB) chains of fibrinogen and slightly the gamma chain (FGG). Shows preference for substrates having a moderate-size and hydrophobic residue at the P1' position. Preferentially cleaves Ala-|-Leu and Tyr-|-Leu bonds. Is more susceptible to tripeptide inhibitors than TM-3 (AC O57413). The chain is Snake venom metalloproteinase TM-1 from Protobothrops mucrosquamatus (Taiwan habu).